Here is a 176-residue protein sequence, read N- to C-terminus: MDLPGPIHDFLLVFLGSGLILGSLGVVLLTNPIYSAFSLGLVLVCISLFYILSNSHFVAAAQLLIYVGAINILILFAVMFMNGSEYYKDLNLWTVGDGITSLVCTSILVSLMTTILDTSWYGIIWTTKSNQIIEQDLIGNSQQIGIHLSTDFFLPFELISIILLVALIGAIAVARQ.

5 helical membrane-spanning segments follow: residues 10–30 (FLLVFLGSGLILGSLGVVLLT), 32–52 (PIYSAFSLGLVLVCISLFYIL), 61–81 (AQLLIYVGAINILILFAVMFM), 92–112 (LWTVGDGITSLVCTSILVSLM), and 152–172 (FFLPFELISIILLVALIGAIA).

Belongs to the complex I subunit 6 family. NDH is composed of at least 16 different subunits, 5 of which are encoded in the nucleus.

It localises to the plastid. Its subcellular location is the chloroplast thylakoid membrane. It carries out the reaction a plastoquinone + NADH + (n+1) H(+)(in) = a plastoquinol + NAD(+) + n H(+)(out). The enzyme catalyses a plastoquinone + NADPH + (n+1) H(+)(in) = a plastoquinol + NADP(+) + n H(+)(out). Its function is as follows. NDH shuttles electrons from NAD(P)H:plastoquinone, via FMN and iron-sulfur (Fe-S) centers, to quinones in the photosynthetic chain and possibly in a chloroplast respiratory chain. The immediate electron acceptor for the enzyme in this species is believed to be plastoquinone. Couples the redox reaction to proton translocation, and thus conserves the redox energy in a proton gradient. In Eucalyptus globulus subsp. globulus (Tasmanian blue gum), this protein is NAD(P)H-quinone oxidoreductase subunit 6, chloroplastic (ndhG).